Here is a 170-residue protein sequence, read N- to C-terminus: Acireductone dioxygenase (170 aa).

Fe(2+) is bound by residues histidine 99, histidine 101, glutamate 105, and histidine 144. Residues histidine 99, histidine 101, glutamate 105, and histidine 144 each coordinate Ni(2+).

The protein belongs to the acireductone dioxygenase (ARD) family. Monomer. Fe(2+) serves as cofactor. The cofactor is Ni(2+).

The catalysed reaction is 1,2-dihydroxy-5-(methylsulfanyl)pent-1-en-3-one + O2 = 3-(methylsulfanyl)propanoate + CO + formate + 2 H(+). It carries out the reaction 1,2-dihydroxy-5-(methylsulfanyl)pent-1-en-3-one + O2 = 4-methylsulfanyl-2-oxobutanoate + formate + 2 H(+). It participates in amino-acid biosynthesis; L-methionine biosynthesis via salvage pathway; L-methionine from S-methyl-5-thio-alpha-D-ribose 1-phosphate: step 5/6. In terms of biological role, catalyzes 2 different reactions between oxygen and the acireductone 1,2-dihydroxy-3-keto-5-methylthiopentene (DHK-MTPene) depending upon the metal bound in the active site. Fe-containing acireductone dioxygenase (Fe-ARD) produces formate and 2-keto-4-methylthiobutyrate (KMTB), the alpha-ketoacid precursor of methionine in the methionine recycle pathway. Ni-containing acireductone dioxygenase (Ni-ARD) produces methylthiopropionate, carbon monoxide and formate, and does not lie on the methionine recycle pathway. The chain is Acireductone dioxygenase from Bacillus cytotoxicus (strain DSM 22905 / CIP 110041 / 391-98 / NVH 391-98).